The following is a 235-amino-acid chain: 2,3,4,5-tetrahydropyridine-2,6-dicarboxylate N-acetyltransferase (235 aa).

It belongs to the transferase hexapeptide repeat family. DapH subfamily.

It carries out the reaction (S)-2,3,4,5-tetrahydrodipicolinate + acetyl-CoA + H2O = L-2-acetamido-6-oxoheptanedioate + CoA. Its pathway is amino-acid biosynthesis; L-lysine biosynthesis via DAP pathway; LL-2,6-diaminopimelate from (S)-tetrahydrodipicolinate (acetylase route): step 1/3. Its function is as follows. Catalyzes the transfer of an acetyl group from acetyl-CoA to tetrahydrodipicolinate. This Exiguobacterium sibiricum (strain DSM 17290 / CCUG 55495 / CIP 109462 / JCM 13490 / 255-15) protein is 2,3,4,5-tetrahydropyridine-2,6-dicarboxylate N-acetyltransferase.